A 113-amino-acid chain; its full sequence is uncharacterized protein (113 aa).

Residues Asp41–Arg88 form the Cupin type-2 domain.

Belongs to the SchB/CurC family.

This is an uncharacterized protein from Bacillus subtilis (strain 168).